We begin with the raw amino-acid sequence, 500 residues long: FAD-linked oxidoreductase chyH (500 aa).

A signal peptide spans 1–20; it reads MRLQAVTAVAAWAVASACQS. The 171-residue stretch at 65 to 235 folds into the FAD-binding PCMH-type domain; sequence LEVPTVNIVI…TSVTSKTYDI (171 aa). 4 N-linked (GlcNAc...) asparagine glycosylation sites follow: Asn-199, Asn-266, Asn-275, and Asn-383.

This sequence belongs to the oxygen-dependent FAD-linked oxidoreductase family. The cofactor is FAD.

It functions in the pathway pigment biosynthesis. Its function is as follows. FAD-linked oxidoreductase; part of the gene cluster that mediates the biosynthesis of the yellow pigment chrysogine. the NRPS chyA mediates the condensation of anthranilic acid and alanine into the intermediate 2-(2-aminopropanamido)benzoic acid. The remainder of the pathway is highly branched yielding at least 13 chrysogine-related compounds. The malonyl transferase chyE converts 2-(2-aminopropanamido)benzoic acid and 2-(2-aminopropanamido)benzamidine into 2-(2-(2-carboxyacetamido)propanamido)benzoic acid and 3-((1-((2-carbamoylphenyl)amino)-1-oxopropan-2-yl)amino)-3-oxopropanoic acid, respectively. ChyD is an amidase, being responsible for the amidation of the carboxylic acid moiety of 2-(2-aminopropanamido)benzoic acid, 2-(2-(2-carboxyacetamido)propanamido)benzoic acid and 2-(2-((4-amino-1-carboxy-4-oxobutyl)amino)propanamido)benzoic acid. ChyC is involved in the same reactions as ChyD, but plays a more minor role in the amidation reactions compared to chyD. The oxidoreductases chyH and chyM are involved in oxidation reactions that form N-pyruvoylanthranilamide from 2-(2-aminopropanamido)benzamidine and (1-((2-carbamoylphenyl)amino)-1-oxopropan-2-yl)glutamine, respectively. N-pyruvoylanthranilamide is further converted via two further branches in the pathway, yielding chrysogine and additional chrysogine-related coumpounds. Chrysogine is likely formed by a spontaneous ring closure from N-pyruvoylanthranilamide. The polypeptide is FAD-linked oxidoreductase chyH (Penicillium rubens (strain ATCC 28089 / DSM 1075 / NRRL 1951 / Wisconsin 54-1255) (Penicillium chrysogenum)).